The following is a 156-amino-acid chain: Cyclin-dependent kinase inhibitor 2A (156 aa).

Met-1 bears the N-acetylmethionine mark. Phosphoserine occurs at positions 7 and 8. ANK repeat units follow at residues 11 to 40 (PSAD…LPNA), 44 to 72 (YGRR…EPNC), 77 to 106 (TLTR…RLDV), and 110 to 139 (WGRL…GTRG). Phosphoserine is present on residues Ser-140 and Ser-152.

It belongs to the CDKN2 cyclin-dependent kinase inhibitor family. In terms of assembly, heterodimer with CDK4 or CDK6. Predominant p16 complexes contained CDK6. Interacts with CDK4 (both 'T-172'-phosphorylated and non-phosphorylated forms); the interaction inhibits cyclin D-CDK4 kinase activity. Interacts with ISCO2. Post-translationally, phosphorylation seems to increase interaction with CDK4. In terms of tissue distribution, widely expressed but not detected in brain or skeletal muscle. Isoform 3 is pancreas-specific.

The protein resides in the cytoplasm. It is found in the nucleus. Acts as a negative regulator of the proliferation of normal cells by interacting strongly with CDK4 and CDK6. This inhibits their ability to interact with cyclins D and to phosphorylate the retinoblastoma protein. The protein is Cyclin-dependent kinase inhibitor 2A of Homo sapiens (Human).